A 34-amino-acid polypeptide reads, in one-letter code: Photosystem II reaction center protein M (34 aa).

A helical membrane pass occupies residues 5–25 (ILALIAIALFISVPTAFLIII).

The protein belongs to the PsbM family. PSII is composed of 1 copy each of membrane proteins PsbA, PsbB, PsbC, PsbD, PsbE, PsbF, PsbH, PsbI, PsbJ, PsbK, PsbL, PsbM, PsbT, PsbX, PsbY, PsbZ, Psb30/Ycf12, at least 3 peripheral proteins of the oxygen-evolving complex and a large number of cofactors. It forms dimeric complexes.

Its subcellular location is the plastid. It localises to the chloroplast thylakoid membrane. Its function is as follows. One of the components of the core complex of photosystem II (PSII). PSII is a light-driven water:plastoquinone oxidoreductase that uses light energy to abstract electrons from H(2)O, generating O(2) and a proton gradient subsequently used for ATP formation. It consists of a core antenna complex that captures photons, and an electron transfer chain that converts photonic excitation into a charge separation. This subunit is found at the monomer-monomer interface. In Gnetum parvifolium (Small-leaved jointfir), this protein is Photosystem II reaction center protein M.